The primary structure comprises 746 residues: Long-chain-alcohol oxidase FAO3 (746 aa).

Residues Ile-139–Phe-159 form a helical membrane-spanning segment. Cys-233 to Ala-248 is a binding site for FAD. His-677 serves as the catalytic Proton acceptor.

It belongs to the GMC oxidoreductase family.

It is found in the membrane. The enzyme catalyses a long-chain primary fatty alcohol + O2 = a long-chain fatty aldehyde + H2O2. Long-chain fatty alcohol oxidase involved in the omega-oxidation pathway of lipid degradation. This Arabidopsis thaliana (Mouse-ear cress) protein is Long-chain-alcohol oxidase FAO3 (FAO3).